The sequence spans 390 residues: GPI inositol-deacylase (390 aa).

Residues 21–41 (FIVYFIICLTIIISALGVYLY) traverse the membrane as a helical segment. The active site involves Ser-202. The chain crosses the membrane as a helical span at residues 354 to 374 (VHLLSLTIFALKWTIIVLAII).

Belongs to the GPI inositol-deacylase family.

Its subcellular location is the endoplasmic reticulum membrane. In terms of biological role, involved in inositol deacylation of GPI-anchored proteins which plays important roles in the quality control and ER-associated degradation of GPI-anchored proteins. This Candida albicans (strain SC5314 / ATCC MYA-2876) (Yeast) protein is GPI inositol-deacylase (BST1).